The following is a 313-amino-acid chain: Kazal-type serine protease inhibitor domain-containing protein 1 (313 aa).

The first 37 residues, 1–37, serve as a signal peptide directing secretion; sequence MPRVFTGLPANYAAPTLALSLLLPLLLVVWTQLPVSA. The 81-residue stretch at 56-136 folds into the IGFBP N-terminal domain; it reads EGEGCAPCRP…EVPEPLCVCR (81 aa). 7 disulfide bridges follow: cysteine 60/cysteine 83, cysteine 63/cysteine 85, cysteine 68/cysteine 86, cysteine 74/cysteine 89, cysteine 97/cysteine 115, cysteine 109/cysteine 133, and cysteine 142/cysteine 175. The 51-residue stretch at 127–177 folds into the Kazal-like domain; the sequence is EVPEPLCVCRSQRPLCGSDGRTYAQICRLQEAARARLDANLTVVHPGPCES. N-linked (GlcNAc...) asparagine glycans are attached at residues asparagine 166 and asparagine 190. An Ig-like C2-type domain is found at 179 to 276; that stretch reads PQILSQPHNI…GQAEASATLT (98 aa). Cysteine 200 and cysteine 260 are joined by a disulfide. N-linked (GlcNAc...) asparagine glycosylation is present at asparagine 284. The tract at residues 290-313 is disordered; it reads QLQSRSLFPEEEEEAESEELGDYY. Residues 298-313 are compositionally biased toward acidic residues; it reads PEEEEEAESEELGDYY.

In terms of tissue distribution, highly expressed in the spleen. Moderately expressed in the skin, lung and urinary bladder. Weakly expressed in the brain, tongue, esophagus, stomach, large intestine, liver and bone. Expressed in osteoblastic cells during bone regeneration. Expressed in secretory osteoblasts in the tooth.

The protein resides in the secreted. Its subcellular location is the extracellular space. It localises to the extracellular matrix. Involved in the proliferation of osteoblasts during bone formation and bone regeneration. Promotes matrix assembly. This chain is Kazal-type serine protease inhibitor domain-containing protein 1 (Kazald1), found in Mus musculus (Mouse).